A 240-amino-acid polypeptide reads, in one-letter code: 4-hydroxy-tetrahydrodipicolinate reductase (240 aa).

Residues 79-81 and 103-106 each bind NAD(+); these read ATT and SANM. The active-site Proton donor/acceptor is the His135. Position 136 (His136) interacts with (S)-2,3,4,5-tetrahydrodipicolinate. Catalysis depends on Lys139, which acts as the Proton donor. 145 to 146 is a binding site for (S)-2,3,4,5-tetrahydrodipicolinate; that stretch reads GT.

The protein belongs to the DapB family.

It is found in the cytoplasm. It catalyses the reaction (S)-2,3,4,5-tetrahydrodipicolinate + NAD(+) + H2O = (2S,4S)-4-hydroxy-2,3,4,5-tetrahydrodipicolinate + NADH + H(+). The enzyme catalyses (S)-2,3,4,5-tetrahydrodipicolinate + NADP(+) + H2O = (2S,4S)-4-hydroxy-2,3,4,5-tetrahydrodipicolinate + NADPH + H(+). It participates in amino-acid biosynthesis; L-lysine biosynthesis via DAP pathway; (S)-tetrahydrodipicolinate from L-aspartate: step 4/4. Catalyzes the conversion of 4-hydroxy-tetrahydrodipicolinate (HTPA) to tetrahydrodipicolinate. The sequence is that of 4-hydroxy-tetrahydrodipicolinate reductase from Staphylococcus aureus (strain USA300).